Consider the following 147-residue polypeptide: Ribonuclease P protein component 2 (147 aa).

It belongs to the eukaryotic/archaeal RNase P protein component 2 family. Consists of a catalytic RNA component and at least 4-5 protein subunits.

It localises to the cytoplasm. The enzyme catalyses Endonucleolytic cleavage of RNA, removing 5'-extranucleotides from tRNA precursor.. In terms of biological role, part of ribonuclease P, a protein complex that generates mature tRNA molecules by cleaving their 5'-ends. The chain is Ribonuclease P protein component 2 from Methanocorpusculum labreanum (strain ATCC 43576 / DSM 4855 / Z).